We begin with the raw amino-acid sequence, 223 residues long: Endonuclease V (223 aa).

Mg(2+) is bound by residues Asp-35 and Asp-103.

Belongs to the endonuclease V family. It depends on Mg(2+) as a cofactor.

It localises to the cytoplasm. The catalysed reaction is Endonucleolytic cleavage at apurinic or apyrimidinic sites to products with a 5'-phosphate.. Its function is as follows. DNA repair enzyme involved in the repair of deaminated bases. Selectively cleaves double-stranded DNA at the second phosphodiester bond 3' to a deoxyinosine leaving behind the intact lesion on the nicked DNA. This is Endonuclease V from Salmonella enteritidis PT4 (strain P125109).